Here is an 860-residue protein sequence, read N- to C-terminus: MATLYPKPKRGQKIIFNEEGEGTIDTKPQGVMFDPGVPWYNIPLPELHEDKKFVNVDHVSELETRGLLLLKEDSERFSETLGHGTADKRMLQTLISSGTTSDRISALTLLVQESPIHAVKALETLLSICSKKSRNEATQAITTLKDLFIGGLLPDRKLKYMKQQSCLGSKNVTDKHLMVWAFESFLKSFYFKYIQIIEALSFDALLFVKSQMVSTIYDLLKAKPEQEQNLLKLLINKLGDKENKIASKASYSILQLEASHPAMKLVITKEIERFIFAPSTSRTSCYYTLITLNQTVLTHKQVDVANLLIEIYFVFFTKLLFALEKEEVADAPTLEKKSLQSDSKNKKSQKRKKDEDLRKEAEENVNSRVISAVLTGVNRAYPFAEVNSEKFDKHMNTLFAITHTASFNTSVQVLMLIFQASASRDFISDRYYKSLYESLLDPRLTTSSKQSLYLNLLYKSLIIDNNIPRVRAFIKRMVQVSAWQQPPLVTGLFHVMHQLVIATTALRSMFTNAEIHDFDGDEEEVFKDVEEDDVSEDQKVDSDKDGKLSDKQSHSAYVVGNVSVSTKKEHLSYDGRKRDPQYSNADGSCLWEIHPFLNHFHPTVSLLAKSLVYGEKILGKPNLSLHTLNHFLDKFAYRNPKKSAAARGHSIMQPLAGGLSKGYVPGSTYSGVPMNSEQFTSKKQEEIPVDELFFYRFFNDKYIKGKQARKTKVDRDEEGEIDEDEVWKALVDSKPQLEMDEEESDFDSEEMDKAMTDMGSDSEQSADENDNESMASEEKPMFSDEENLSEIAHSEDEFDDTVDFFEDENDLLPFNETDDEEEIQTVDHSETHSHKKKKRKAIKDLPVFADAESYAHLLEN.

Basic and acidic residues-rich tracts occupy residues 334–345 (LEKKSLQSDSKN) and 536–551 (EDQKVDSDKDGKLSDK). Disordered stretches follow at residues 334-360 (LEKKSLQSDSKNKKSQKRKKDEDLRKE), 530-551 (EEDDVSEDQKVDSDKDGKLSDK), 708-798 (ARKT…EDEF), and 813-842 (PFNETDDEEEIQTVDHSETHSHKKKKRKAI). 3 stretches are compositionally biased toward acidic residues: residues 716-725 (DEEGEIDEDE), 738-750 (EMDEEESDFDSEE), and 813-824 (PFNETDDEEEIQ). A phosphoserine mark is found at Ser744 and Ser748.

This sequence belongs to the CBF/MAK21 family.

This is an uncharacterized protein from Schizosaccharomyces pombe (strain 972 / ATCC 24843) (Fission yeast).